The following is a 372-amino-acid chain: Beta sliding clamp (372 aa).

Belongs to the beta sliding clamp family. In terms of assembly, forms a ring-shaped head-to-tail homodimer around DNA which binds and tethers DNA polymerases and other proteins to the DNA. The DNA replisome complex has a single clamp-loading complex (3 tau and 1 each of delta, delta', psi and chi subunits) which binds 3 Pol III cores (1 core on the leading strand and 2 on the lagging strand) each with a beta sliding clamp dimer. Additional proteins in the replisome are other copies of gamma, psi and chi, Ssb, DNA helicase and RNA primase.

The protein localises to the cytoplasm. In terms of biological role, confers DNA tethering and processivity to DNA polymerases and other proteins. Acts as a clamp, forming a ring around DNA (a reaction catalyzed by the clamp-loading complex) which diffuses in an ATP-independent manner freely and bidirectionally along dsDNA. Initially characterized for its ability to contact the catalytic subunit of DNA polymerase III (Pol III), a complex, multichain enzyme responsible for most of the replicative synthesis in bacteria; Pol III exhibits 3'-5' exonuclease proofreading activity. The beta chain is required for initiation of replication as well as for processivity of DNA replication. In Caulobacter vibrioides (strain ATCC 19089 / CIP 103742 / CB 15) (Caulobacter crescentus), this protein is Beta sliding clamp (dnaN).